We begin with the raw amino-acid sequence, 501 residues long: tRNA (guanine(37)-N(1))-methyltransferase (501 aa).

Residues H282, 320–321 (DL), 348–349 (DG), and N380 each bind S-adenosyl-L-methionine. The tract at residues 474-501 (LQNDQEPPLKRQKTGDPFSGEPQIASDS) is disordered.

The protein belongs to the class I-like SAM-binding methyltransferase superfamily. TRM5/TYW2 family. Monomer.

Its subcellular location is the mitochondrion matrix. It is found in the nucleus. It localises to the cytoplasm. It carries out the reaction guanosine(37) in tRNA + S-adenosyl-L-methionine = N(1)-methylguanosine(37) in tRNA + S-adenosyl-L-homocysteine + H(+). In terms of biological role, involved in mitochondrial tRNA methylation. Specifically methylates the N1 position of guanosine-37 in various tRNAs. Methylation is not dependent on the nature of the nucleoside 5' of the target nucleoside. This is the first step in the biosynthesis of wybutosine (yW), a modified base adjacent to the anticodon of tRNAs and required for accurate decoding. In Mus musculus (Mouse), this protein is tRNA (guanine(37)-N(1))-methyltransferase (Trmt5).